Here is a 511-residue protein sequence, read N- to C-terminus: Peptide transporter YePEPT (511 aa).

The Cytoplasmic portion of the chain corresponds to 1-19 (MQTSTNTPGGRTFFGHPYP). A helical transmembrane segment spans residues 20–45 (LSGLFLSEMWERFSFYGIRPLLILFM). Residues 46-59 (AATVFDGGMGLPRE) lie on the Periplasmic side of the membrane. A helical transmembrane segment spans residues 60–84 (QASAIVGIFAGSMYLAALPGGLLAD). Topologically, residues 85–88 (NWLG) are cytoplasmic. A helical membrane pass occupies residues 89 to 109 (QQRAVWYGSILIALGHLSIAL). The Periplasmic segment spans residues 110–115 (SAFFGN). Residues 116–138 (DLFFIGLVFIVLGTGLFKTCISV) traverse the membrane as a helical segment. Residues 139-149 (MVGTLYKPGDA) are Cytoplasmic-facing. A helical transmembrane segment spans residues 150-175 (RRDGGFSLFYMGINMGSFIAPLLSGW). The Periplasmic portion of the chain corresponds to 176 to 181 (LLRTHG). The helical transmembrane segment at 182 to 208 (WHWGFGIGGIGMLVALLIFRGFAIPAM) threads the bilayer. Topologically, residues 209–232 (KRYDAEVGLDSSWNKPTNQRQGVG) are cytoplasmic. The helical transmembrane segment at 233 to 253 (RWVTAIMAVVVVIIALISQGV) threads the bilayer. Residues 254–256 (IPI) are Periplasmic-facing. A helical membrane pass occupies residues 257–279 (NPVMIASLLVYVIAASVTLYFIY). Over 280 to 294 (LFAFAKMSRKDRARL) the chain is Cytoplasmic. The chain crosses the membrane as a helical span at residues 295-321 (LVCFILLVSAAFFWSAFEQKPTSFNLF). Topologically, residues 322–335 (ANDYTDRMVMGFEI) are periplasmic. A helical membrane pass occupies residues 336-357 (PTVWFQSINALFIILLAPVFSW). Residues 358-369 (AWPALAKKKIQP) are Cytoplasmic-facing. A helical membrane pass occupies residues 370–396 (SSITKFVIGILCAAAGFAVMMYAAQHV). The Periplasmic portion of the chain corresponds to 397–405 (LSSGGAGVS). The chain crosses the membrane as a helical span at residues 406–426 (PLWLVMSILLLTLGELCLSPI). The Cytoplasmic portion of the chain corresponds to 427–441 (GLATMTLLAPDRMRG). Residues 442-462 (QVMGLWFCASSLGNLAAGLIG) traverse the membrane as a helical segment. The Periplasmic portion of the chain corresponds to 463-471 (GHVKADQLD). A helical transmembrane segment spans residues 472-496 (MLPTLFARCSIALVICAAVLILLIV). At 497–511 (PIRRLMNNTQGQQTA) the chain is on the cytoplasmic side.

Belongs to the major facilitator superfamily. Proton-dependent oligopeptide transporter (POT/PTR) (TC 2.A.17) family.

It is found in the cell inner membrane. Its activity is regulated as follows. Transport is inhibited by the proton ionophore carbonyl cyanide m-chlorophenylhydrazone (CCCP). Mediates the proton-dependent uptake of dipeptides. Shows higher affinity for dipeptides with a negatively charged amino acid residue at the N-terminal position, such as Asp-Ala and Glu-Ala. Also displays specificity for Ala-Ala, Ala-Tyr and Tyr-Ala. The protein is Peptide transporter YePEPT of Yersinia enterocolitica subsp. palearctica serotype O:3 (strain YE-P4).